Here is an 88-residue protein sequence, read N- to C-terminus: UPF0367 protein Tery_1229 (88 aa).

Belongs to the UPF0367 family.

This is UPF0367 protein Tery_1229 from Trichodesmium erythraeum (strain IMS101).